Reading from the N-terminus, the 574-residue chain is DNA polymerase I (574 aa).

The 158-residue stretch at 4–161 folds into the 3'-5' exonuclease domain; it reads EYVTGEEGLK…ELFPKMRDML (158 aa).

The protein belongs to the DNA polymerase type-A family.

It catalyses the reaction DNA(n) + a 2'-deoxyribonucleoside 5'-triphosphate = DNA(n+1) + diphosphate. This Aquifex aeolicus (strain VF5) protein is DNA polymerase I (polA).